Reading from the N-terminus, the 837-residue chain is Protein TRANSPARENT TESTA 9 (837 aa).

Positions 42–192 (LRSIAEILTY…AVRALTLNVY (151 aa)) constitute an FPL domain. Residues 366-386 (TEEANQQCSSTAAGMSDDGNS) are disordered. The segment covering 368-378 (EANQQCSSTAA) has biased composition (polar residues).

The protein belongs to the CLEC16A/gop-1 family.

The protein localises to the golgi apparatus membrane. Involved in membrane trafficking and vacuole development through membrane fusion at the vacuole. Required for membrane trafficking machinery and accumulation of flavonoids in the seed coat. This chain is Protein TRANSPARENT TESTA 9, found in Arabidopsis thaliana (Mouse-ear cress).